The chain runs to 124 residues: UPF0102 protein tll1737 (124 aa).

This sequence belongs to the UPF0102 family.

The sequence is that of UPF0102 protein tll1737 from Thermosynechococcus vestitus (strain NIES-2133 / IAM M-273 / BP-1).